A 984-amino-acid polypeptide reads, in one-letter code: Glycine dehydrogenase (decarboxylating) (984 aa).

At K702 the chain carries N6-(pyridoxal phosphate)lysine.

This sequence belongs to the GcvP family. As to quaternary structure, the glycine cleavage system is composed of four proteins: P, T, L and H. Requires pyridoxal 5'-phosphate as cofactor.

The catalysed reaction is N(6)-[(R)-lipoyl]-L-lysyl-[glycine-cleavage complex H protein] + glycine + H(+) = N(6)-[(R)-S(8)-aminomethyldihydrolipoyl]-L-lysyl-[glycine-cleavage complex H protein] + CO2. The glycine cleavage system catalyzes the degradation of glycine. The P protein binds the alpha-amino group of glycine through its pyridoxal phosphate cofactor; CO(2) is released and the remaining methylamine moiety is then transferred to the lipoamide cofactor of the H protein. This is Glycine dehydrogenase (decarboxylating) from Xanthomonas oryzae pv. oryzae (strain MAFF 311018).